Consider the following 142-residue polypeptide: Large ribosomal subunit protein uL11 (142 aa).

Belongs to the universal ribosomal protein uL11 family. As to quaternary structure, part of the ribosomal stalk of the 50S ribosomal subunit. Interacts with L10 and the large rRNA to form the base of the stalk. L10 forms an elongated spine to which L12 dimers bind in a sequential fashion forming a multimeric L10(L12)X complex. In terms of processing, one or more lysine residues are methylated.

In terms of biological role, forms part of the ribosomal stalk which helps the ribosome interact with GTP-bound translation factors. This Afipia carboxidovorans (strain ATCC 49405 / DSM 1227 / KCTC 32145 / OM5) (Oligotropha carboxidovorans) protein is Large ribosomal subunit protein uL11.